The following is a 376-amino-acid chain: MLSMAVTPSNTLTSQYPTKQENYNQNYCSIKSPSPTSTPTSTSLTMTSPPQLHNPHASITLPSIHSLDIPAFPHYEQEYSRASVFQNYSSNSPTPSNSSYSPTLLIPSNDRPASSSVYSNSSSTLLLSPGMSTTPNVNCIAPVSRPRSTSNLTENSEQSFTSQQSHPAISSNATITSPQLSVKSENEQLHEPQNSNTIISPRQNKKNWKPRKKKQCPECNLYFSNLATHKSTHLKPNNRPHICKYCERGFARPNDLFRHVKCHWKEIGSDQGQFKCPFKNIDSSKRENQEKVTGNTGVPDHCCHNTGIFSRCDTFKNHLKAIHFQYPNGTKKEQRNLVNGKCRMCQQEFRNVDDWMHNHIETNSCPYAINLIKKEH.

Disordered regions lie at residues 25–58, 89–122, and 137–210; these read QNYC…PHAS, SSNS…SNSS, and VNCI…NWKP. 2 stretches are compositionally biased toward low complexity: residues 32–50 and 89–103; these read SPSP…TSPP and SSNS…YSPT. Composition is skewed to polar residues over residues 146 to 183 and 191 to 200; these read PRST…LSVK and EPQNSNTIIS. The C2H2-type zinc finger occupies 241–263; it reads HICKYCERGFARPNDLFRHVKCH.

It is found in the nucleus. Functionally, probable transcription factor involved in response to cell wall damage. This chain is Transcriptional regulator STP4 (STP4), found in Candida albicans (strain SC5314 / ATCC MYA-2876) (Yeast).